We begin with the raw amino-acid sequence, 115 residues long: Large ribosomal subunit protein bL19 (115 aa).

Belongs to the bacterial ribosomal protein bL19 family. In terms of assembly, part of the 50S ribosomal subunit.

Its function is as follows. This protein is located at the 30S-50S ribosomal subunit interface and may play a role in the structure and function of the aminoacyl-tRNA binding site. This is Large ribosomal subunit protein bL19 (rplS) from Bacillus subtilis (strain 168).